A 555-amino-acid chain; its full sequence is Glucose-6-phosphate isomerase (555 aa).

Glu-365 acts as the Proton donor in catalysis. Catalysis depends on residues His-396 and Lys-522.

It belongs to the GPI family.

The protein localises to the cytoplasm. It carries out the reaction alpha-D-glucose 6-phosphate = beta-D-fructose 6-phosphate. It functions in the pathway carbohydrate biosynthesis; gluconeogenesis. It participates in carbohydrate degradation; glycolysis; D-glyceraldehyde 3-phosphate and glycerone phosphate from D-glucose: step 2/4. Functionally, catalyzes the reversible isomerization of glucose-6-phosphate to fructose-6-phosphate. This Psychrobacter arcticus (strain DSM 17307 / VKM B-2377 / 273-4) protein is Glucose-6-phosphate isomerase.